Here is a 248-residue protein sequence, read N- to C-terminus: Phosphatidylglycerol--prolipoprotein diacylglyceryl transferase (248 aa).

3 consecutive transmembrane segments (helical) span residues 6–26 (FTLF…GMIL), 47–67 (NIAI…YVVF), and 84–104 (GGGL…YIYT). Position 130 (Arg-130) interacts with a 1,2-diacyl-sn-glycero-3-phospho-(1'-sn-glycerol). The next 2 helical transmembrane spans lie at 186-206 (GQVI…IEGL) and 218-238 (MAQV…VYLS).

This sequence belongs to the Lgt family.

The protein resides in the cell membrane. The catalysed reaction is L-cysteinyl-[prolipoprotein] + a 1,2-diacyl-sn-glycero-3-phospho-(1'-sn-glycerol) = an S-1,2-diacyl-sn-glyceryl-L-cysteinyl-[prolipoprotein] + sn-glycerol 1-phosphate + H(+). It functions in the pathway protein modification; lipoprotein biosynthesis (diacylglyceryl transfer). Its function is as follows. Catalyzes the transfer of the diacylglyceryl group from phosphatidylglycerol to the sulfhydryl group of the N-terminal cysteine of a prolipoprotein, the first step in the formation of mature lipoproteins. The sequence is that of Phosphatidylglycerol--prolipoprotein diacylglyceryl transferase from Clostridioides difficile (strain 630) (Peptoclostridium difficile).